A 340-amino-acid polypeptide reads, in one-letter code: Methionine import ATP-binding protein MetN (340 aa).

In terms of domain architecture, ABC transporter spans 8-246; the sequence is ISVKNLNKEI…PYSSITEELF (239 aa). Residue 40–47 coordinates ATP; sequence GHSGSGKS.

Belongs to the ABC transporter superfamily. Methionine importer (TC 3.A.1.24) family. The complex is composed of two ATP-binding proteins (MetN), two transmembrane proteins (MetI) and a solute-binding protein (MetQ).

The protein localises to the cell inner membrane. It catalyses the reaction L-methionine(out) + ATP + H2O = L-methionine(in) + ADP + phosphate + H(+). The catalysed reaction is D-methionine(out) + ATP + H2O = D-methionine(in) + ADP + phosphate + H(+). Its function is as follows. Part of the ABC transporter complex MetNIQ involved in methionine import. Responsible for energy coupling to the transport system. This chain is Methionine import ATP-binding protein MetN, found in Chlamydia felis (strain Fe/C-56) (Chlamydophila felis).